A 595-amino-acid chain; its full sequence is MESNHKSGDGLSGTQKEAALRALVQRTGYSLVQENGQRKYGGPPPGWDSTPPERGCEIFIGKLPRDLFEDELIPLCEKIGKIYEMRLMMDFNGNNRGYAFVTFSNKQEAKNAIKQLNNYEIRTGRLLGVCASVDNCRLFVGGIPKTKKREEILSEMKKVTEGVVDVIVYPSAADKTKNRGFAFVEYESHRAAAMARRRLLPGRIQLWGHPIAVDWAEPEVEVDEDTMSSVKILYVRNLMLSTSEEMIEKEFNSIKPGAVERVKKIRDYAFVHFSNREDAVEAMKALNGKVLDGSPIEVTLAKPVDKDSYVRYTRGTGGRNTMLQGEYTYPLSHVYDPTTTYLGAPVFYTPQAYAAIPSLHFPATKGHLSNRALIRTPSVREIYMNVPVGAAGVRGLGGRGYLAYTGLGRGYHVKGDKREDKLYDLLPGMELTPMNTVSLKPQGIKLAPQILEEICQKNNWGQPVYQLHSAIGQDQRQLFLYKVTIPALASQNPAIHPFIPPKLSAYVDEAKRYAAEHTLQTLGIPTEGGDAGTTAPTATSATVFPGYAVPSATAPVSTAQLKQAVTLGQDLAAYTTYEVYPTFALTTRGDAYGTF.

RRM domains are found at residues 56 to 134 (CEIF…ASVD), 136 to 218 (CRLF…WAEP), and 231 to 303 (KILY…LAKP). The required for nuclear localization stretch occupies residues 360 to 409 (HFPATKGHLSNRALIRTPSVREIYMNVPVGAAGVRGLGGRGYLAYTGLGR).

Part of the apolipoprotein B mRNA editing complex with APOBEC1. Interacts with TNPO2; TNPO2 may be responsible for transport of A1CF into the nucleus. Interacts with SYNCRIP. Interacts with CELF2/CUGBP2. Interacts with RBM47. In terms of tissue distribution, expressed primarily in liver, small intestine and kidney.

The protein resides in the nucleus. It is found in the endoplasmic reticulum. It localises to the cytoplasm. Its function is as follows. Essential component of the apolipoprotein B mRNA editing enzyme complex which is responsible for the postranscriptional editing of a CAA codon for Gln to a UAA codon for stop in APOB mRNA. Binds to APOB mRNA and is probably responsible for docking the catalytic subunit, APOBEC1, to the mRNA to allow it to deaminate its target cytosine. The complex also seems to protect the edited APOB mRNA from nonsense-mediated decay. This is APOBEC1 complementation factor (A1cf) from Mus musculus (Mouse).